We begin with the raw amino-acid sequence, 681 residues long: Phosphomethylpyrimidine synthase (681 aa).

The span at 1 to 13 (MSNNTTSLPAENS) shows a compositional bias: polar residues. Residues 1–29 (MSNNTTSLPAENSSHPRKGTPIRKKQREE) are disordered. Residues 15–25 (HPRKGTPIRKK) show a composition bias toward basic residues. Substrate is bound by residues Asn-254, Met-283, Tyr-312, His-348, 368-370 (SRG), 409-412 (DGLR), and Glu-448. His-452 contacts Zn(2+). Tyr-475 is a substrate binding site. His-516 is a binding site for Zn(2+). 3 residues coordinate [4Fe-4S] cluster: Cys-596, Cys-599, and Cys-604. Residues 658 to 667 (FRSRGSELYH) show a composition bias toward basic and acidic residues. Residues 658–681 (FRSRGSELYHRPANLSAEANNEPT) are disordered.

The protein belongs to the ThiC family. Homodimer. It depends on [4Fe-4S] cluster as a cofactor.

It carries out the reaction 5-amino-1-(5-phospho-beta-D-ribosyl)imidazole + S-adenosyl-L-methionine = 4-amino-2-methyl-5-(phosphooxymethyl)pyrimidine + CO + 5'-deoxyadenosine + formate + L-methionine + 3 H(+). The protein operates within cofactor biosynthesis; thiamine diphosphate biosynthesis. In terms of biological role, catalyzes the synthesis of the hydroxymethylpyrimidine phosphate (HMP-P) moiety of thiamine from aminoimidazole ribotide (AIR) in a radical S-adenosyl-L-methionine (SAM)-dependent reaction. The protein is Phosphomethylpyrimidine synthase of Yersinia pseudotuberculosis serotype I (strain IP32953).